We begin with the raw amino-acid sequence, 473 residues long: H(+)/Cl(-) exchange transporter ClcA (473 aa).

The Cytoplasmic segment spans residues M1–P32. Residues L33–V69 form a helical membrane-spanning segment. Over Q70–F76 the chain is Periplasmic. A helical transmembrane segment spans residues L77–F100. The short motif at G106–P110 is the Selectivity filter part_1 element. S107 contacts chloride. An intramembrane region (helical) is located at residues I109–L116. Over E117–R123 the chain is Cytoplasmic. Helical transmembrane passes span W124 to A141 and E148 to F166. A Selectivity filter part_2 motif is present at residues G146 to P150. At R167–T176 the chain is on the cytoplasmic side. Intramembrane regions (helical) lie at residues L177–A189 and P193–I201. Over E202–S214 the chain is Cytoplasmic. The chain crosses the membrane as a helical span at residues I215 to F232. Over N233–L252 the chain is Periplasmic. Residues W253–Q281 traverse the membrane as a helical segment. Residues R282 to E287 are Cytoplasmic-facing. The helical transmembrane segment at I288–E309 threads the bilayer. Over P310–S329 the chain is Periplasmic. 2 helical membrane passes run V330–S349 and G355–A376. Positions G355–P359 match the Selectivity filter part_3 motif. I356 and F357 together coordinate chloride. The Periplasmic portion of the chain corresponds to V377 to A386. Positions G387 to S401 form an intramembrane region, helical. The segment at residues V402–A404 is an intramembrane region (note=Loop between two helices). The helical intramembrane region spans P405–T416. The note=Loop between two helices intramembrane region spans D417 to L421. A helical membrane pass occupies residues I422–F438. Topologically, residues L439–T473 are cytoplasmic. A chloride-binding site is contributed by Y445.

It belongs to the chloride channel (TC 2.A.49) family. ClcA subfamily. Homodimer.

The protein resides in the cell inner membrane. It catalyses the reaction 2 chloride(in) + H(+)(out) = 2 chloride(out) + H(+)(in). Functionally, proton-coupled chloride transporter. Functions as antiport system and exchanges two chloride ions for 1 proton. Probably acts as an electrical shunt for an outwardly-directed proton pump that is linked to amino acid decarboxylation, as part of the extreme acid resistance (XAR) response. This Salmonella gallinarum (strain 287/91 / NCTC 13346) protein is H(+)/Cl(-) exchange transporter ClcA.